A 174-amino-acid chain; its full sequence is Nicotinamide-nucleotide adenylyltransferase (174 aa).

This sequence belongs to the archaeal NMN adenylyltransferase family.

The protein localises to the cytoplasm. It catalyses the reaction beta-nicotinamide D-ribonucleotide + ATP + H(+) = diphosphate + NAD(+). It participates in cofactor biosynthesis; NAD(+) biosynthesis; NAD(+) from nicotinamide D-ribonucleotide: step 1/1. The polypeptide is Nicotinamide-nucleotide adenylyltransferase (Methanospirillum hungatei JF-1 (strain ATCC 27890 / DSM 864 / NBRC 100397 / JF-1)).